Reading from the N-terminus, the 281-residue chain is 4-diphosphocytidyl-2-C-methyl-D-erythritol kinase (281 aa).

The active site involves Lys11. An ATP-binding site is contributed by 92 to 102 (LVSAGLAGGSA). Asp132 is a catalytic residue.

The protein belongs to the GHMP kinase family. IspE subfamily.

It catalyses the reaction 4-CDP-2-C-methyl-D-erythritol + ATP = 4-CDP-2-C-methyl-D-erythritol 2-phosphate + ADP + H(+). It participates in isoprenoid biosynthesis; isopentenyl diphosphate biosynthesis via DXP pathway; isopentenyl diphosphate from 1-deoxy-D-xylulose 5-phosphate: step 3/6. Catalyzes the phosphorylation of the position 2 hydroxy group of 4-diphosphocytidyl-2C-methyl-D-erythritol. The chain is 4-diphosphocytidyl-2-C-methyl-D-erythritol kinase from Ehrlichia ruminantium (strain Welgevonden).